Reading from the N-terminus, the 158-residue chain is Endoribonuclease YbeY (158 aa).

The Zn(2+) site is built by H118, H122, and H128.

The protein belongs to the endoribonuclease YbeY family. Zn(2+) serves as cofactor.

It is found in the cytoplasm. Functionally, single strand-specific metallo-endoribonuclease involved in late-stage 70S ribosome quality control and in maturation of the 3' terminus of the 16S rRNA. The polypeptide is Endoribonuclease YbeY (Haemophilus ducreyi (strain 35000HP / ATCC 700724)).